The chain runs to 636 residues: DNA gyrase subunit B (636 aa).

The region spanning 421-535 is the Toprim domain; the sequence is TELFIVEGDS…QGRVYIALPP (115 aa). Mg(2+)-binding residues include E427, D500, and D502.

This sequence belongs to the type II topoisomerase GyrB family. In terms of assembly, heterotetramer, composed of two GyrA and two GyrB chains. In the heterotetramer, GyrA contains the active site tyrosine that forms a transient covalent intermediate with DNA, while GyrB binds cofactors and catalyzes ATP hydrolysis. The cofactor is Mg(2+). Mn(2+) serves as cofactor. Requires Ca(2+) as cofactor.

Its subcellular location is the cytoplasm. It catalyses the reaction ATP-dependent breakage, passage and rejoining of double-stranded DNA.. Functionally, a type II topoisomerase that negatively supercoils closed circular double-stranded (ds) DNA in an ATP-dependent manner to modulate DNA topology and maintain chromosomes in an underwound state. Negative supercoiling favors strand separation, and DNA replication, transcription, recombination and repair, all of which involve strand separation. Also able to catalyze the interconversion of other topological isomers of dsDNA rings, including catenanes and knotted rings. Type II topoisomerases break and join 2 DNA strands simultaneously in an ATP-dependent manner. The chain is DNA gyrase subunit B from Thermotoga maritima (strain ATCC 43589 / DSM 3109 / JCM 10099 / NBRC 100826 / MSB8).